Consider the following 920-residue polypeptide: Histone-lysine N-methyltransferase, H3 lysine-4 specific (920 aa).

The region spanning 94 to 179 (TQVFVSNISP…KPLSVVLDRD (86 aa)) is the RRM domain. Residues 205 to 216 (KQRFEREDESSR) are compositionally biased toward basic and acidic residues. Disordered stretches follow at residues 205–242 (KQRF…TLSN) and 448–485 (KRVD…YQLN). Composition is skewed to polar residues over residues 233–242 (PSKNSQTLSN) and 453–462 (SKMNLSAGSK). Residues 463–476 (TKSKLQRRRRRRHE) are compositionally biased toward basic residues. Residues 749–754 (RVNNRR) carry the RxxxRR motif motif. The region spanning 781-898 (KQLHFGPSRI…HGEELTYDYK (118 aa)) is the SET domain. Tyr-897 provides a ligand contact to S-adenosyl-L-methionine. The Post-SET domain occupies 904–920 (DKIPCLCGAPTCRGYLN).

It belongs to the class V-like SAM-binding methyltransferase superfamily. In terms of assembly, component of the Set1C/COMPASS complex composed of ash2, sdc1, set1, shg1, spp1, swd1, swd2 and swd3.

Its subcellular location is the nucleus. It localises to the chromosome. The catalysed reaction is L-lysyl(4)-[histone H3] + 3 S-adenosyl-L-methionine = N(6),N(6),N(6)-trimethyl-L-lysyl(4)-[histone H3] + 3 S-adenosyl-L-homocysteine + 3 H(+). It catalyses the reaction N(6)-methyl-L-lysyl(4)-[histone H3] + S-adenosyl-L-methionine = N(6),N(6)-dimethyl-L-lysyl(4)-[histone H3] + S-adenosyl-L-homocysteine + H(+). The enzyme catalyses N(6),N(6)-dimethyl-L-lysyl(4)-[histone H3] + S-adenosyl-L-methionine = N(6),N(6),N(6)-trimethyl-L-lysyl(4)-[histone H3] + S-adenosyl-L-homocysteine + H(+). Catalytic component of the COMPASS (Set1C) complex that specifically mono-, di- and trimethylates histone H3 to form H3K4me1/2/3. Binds RNA which might negatively affect its histone methyltransferase activity. COMPASS recognizes ubiquitinated H2B on one face of the nucleosome which stimulates the methylation of H3 on the opposing face. Methylation promotes maintenance of active chromatin states at euchromatic chromosomal domains and is present throughout the cell cycle. Plays a role in telomere maintenance and DNA repair in an ATM kinase rad3-dependent pathway. Required for efficient telomeric and centromeric silencing. This chain is Histone-lysine N-methyltransferase, H3 lysine-4 specific, found in Schizosaccharomyces pombe (strain 972 / ATCC 24843) (Fission yeast).